The primary structure comprises 360 residues: Type II methyltransferase M2.ScrFI (360 aa).

An SAM-dependent MTase C5-type domain is found at 2–360 (LRVFEAFAGY…SLFKELFKSQ (359 aa)). Residue C127 is part of the active site.

This sequence belongs to the class I-like SAM-binding methyltransferase superfamily. C5-methyltransferase family.

It catalyses the reaction a 2'-deoxycytidine in DNA + S-adenosyl-L-methionine = a 5-methyl-2'-deoxycytidine in DNA + S-adenosyl-L-homocysteine + H(+). In terms of biological role, a methylase, recognizes the double-stranded sequence 5'-CCNGG-3', methylates C-2 on both strands, and protects the DNA from cleavage by the ScrFI endonuclease. The chain is Type II methyltransferase M2.ScrFI (scrFIBM) from Lactococcus lactis subsp. cremoris (Streptococcus cremoris).